The sequence spans 494 residues: Integrin beta-like protein 1 (494 aa).

The N-terminal stretch at 1 to 23 is a signal peptide; that stretch reads MRPPGFRNFLLLASSLLFAGLSA. 40 disulfides stabilise this stretch: cysteine 40-cysteine 71, cysteine 51-cysteine 69, cysteine 63-cysteine 74, cysteine 76-cysteine 89, cysteine 91-cysteine 112, cysteine 96-cysteine 110, cysteine 104-cysteine 115, cysteine 117-cysteine 126, cysteine 132-cysteine 159, cysteine 143-cysteine 157, cysteine 151-cysteine 162, cysteine 164-cysteine 178, cysteine 180-cysteine 202, cysteine 185-cysteine 200, cysteine 194-cysteine 205, cysteine 207-cysteine 216, cysteine 220-cysteine 247, cysteine 231-cysteine 245, cysteine 239-cysteine 250, cysteine 252-cysteine 269, cysteine 271-cysteine 296, cysteine 276-cysteine 294, cysteine 288-cysteine 299, cysteine 301-cysteine 310, cysteine 316-cysteine 343, cysteine 327-cysteine 341, cysteine 335-cysteine 346, cysteine 348-cysteine 361, cysteine 363-cysteine 384, cysteine 368-cysteine 382, cysteine 376-cysteine 387, cysteine 389-cysteine 398, cysteine 404-cysteine 431, cysteine 415-cysteine 429, cysteine 423-cysteine 434, cysteine 436-cysteine 448, cysteine 450-cysteine 471, cysteine 455-cysteine 469, cysteine 463-cysteine 474, and cysteine 476-cysteine 485. I-EGF domains follow at residues 40 to 90, 91 to 127, 132 to 179, 180 to 217, 220 to 270, 271 to 311, 316 to 362, 363 to 399, 404 to 449, and 450 to 486; these read CRLS…PLCE, CHEW…DACQ, CDLT…KFCE, CDDR…DKCE, CDIT…DTCE, CDER…KKCE, CTLS…KTCE, CDDR…KLCQ, CNMT…EFCD, and CDDR…NACE. The stretch at 51–95 is one I repeat; that stretch reads CRAPGQPPGAALCHGRGRCDCGVCICHVTEPGMFFGPLCECHEWV. A cysteine-rich tandem repeats region spans residues 51 to 494; it reads CRAPGQPPGA…CEIWLGSEYP (444 aa). An II repeat occupies 96–142; it reads CETYDGSTCAGHGKCDCGKCKCDQGWYGDACQYPTNCDLTKKKSNQM. The III repeat unit spans residues 143-184; sequence CKNSQDIICSNAGTCHCGRCKCDNSDGSGLVYGKFCECDDRE. An IV repeat occupies 185–230; it reads CIDDETEEICGGHGKCYCGNCYCKAGWHGDKCEFQCDITPWESKRR. A V repeat occupies 231–275; sequence CTSPDGKICSNRGTCVCGECTCHDVDPTGDWGDIHGDTCECDERD. The stretch at 276 to 326 is one VI repeat; that stretch reads CRAVYDRYSDDFCSGHGQCNCGRCDCKAGWYGKKCEHPQSCTLSAEESIRK. One copy of the VII repeat lies at 327-367; it reads CQGSSDLPCSGRGKCECGKCTCYPPGDRRVYGKTCECDDRR. The VIII repeat unit spans residues 368-414; it reads CEDLDGVVCGGHGTCSCGRCVCERGWFGKLCQHPRKCNMTEEQSKNL. The N-linked (GlcNAc...) asparagine glycan is linked to asparagine 405. Residues 415–454 form an IX repeat; that stretch reads CESADGILCSGKGSCHCGKCICSAEEWYISGEFCDCDDRD. One copy of the X repeat lies at 455-494; that stretch reads CDKHDGLICTGNGICSCGNCECWDGWNGNACEIWLGSEYP.

Widely expressed in many tissues, but readily detectable only in aorta.

It is found in the secreted. This chain is Integrin beta-like protein 1 (ITGBL1), found in Homo sapiens (Human).